The primary structure comprises 201 residues: Putative manganese efflux pump MntP (201 aa).

Transmembrane regions (helical) follow at residues L3–T23, I39–I59, I65–I85, L116–F136, I141–M161, and I176–I196.

It belongs to the MntP (TC 9.B.29) family.

Its subcellular location is the cell membrane. Its function is as follows. Probably functions as a manganese efflux pump. The polypeptide is Putative manganese efflux pump MntP (Clostridium botulinum (strain Loch Maree / Type A3)).